The chain runs to 152 residues: Deoxyuridine 5'-triphosphate nucleotidohydrolase (152 aa).

Residues 70–72 (RSG), Asn83, 87–89 (TID), and Lys97 each bind substrate.

This sequence belongs to the dUTPase family. Mg(2+) is required as a cofactor.

It carries out the reaction dUTP + H2O = dUMP + diphosphate + H(+). It functions in the pathway pyrimidine metabolism; dUMP biosynthesis; dUMP from dCTP (dUTP route): step 2/2. In terms of biological role, this enzyme is involved in nucleotide metabolism: it produces dUMP, the immediate precursor of thymidine nucleotides and it decreases the intracellular concentration of dUTP so that uracil cannot be incorporated into DNA. This chain is Deoxyuridine 5'-triphosphate nucleotidohydrolase, found in Corynebacterium diphtheriae (strain ATCC 700971 / NCTC 13129 / Biotype gravis).